A 76-amino-acid polypeptide reads, in one-letter code: Conotoxin Vc6.6 (76 aa).

Residues methionine 1–alanine 22 form the signal peptide. Positions valine 23–arginine 52 are excised as a propeptide. 3 disulfide bridges follow: cysteine 53–cysteine 67, cysteine 60–cysteine 71, and cysteine 66–cysteine 75.

The protein belongs to the conotoxin O1 superfamily. In terms of tissue distribution, expressed by the venom duct.

The protein resides in the secreted. In Conus victoriae (Queen Victoria cone), this protein is Conotoxin Vc6.6.